The sequence spans 207 residues: Nitrophorin-1 (207 aa).

Residues 1-23 (MKSYTALLAVAILCLFAAVGVSG) form the signal peptide. 2 disulfides stabilise this stretch: cysteine 25–cysteine 145 and cysteine 64–cysteine 194. Histidine 82 contributes to the heme binding site.

The protein belongs to the calycin superfamily. Nitrophorin family. In terms of tissue distribution, salivary gland (at protein level).

The protein resides in the secreted. Functionally, heme-based protein that deliver nitric oxide gas (NO) to the victim while feeding, resulting in vasodilation and inhibition of platelet aggregation. Reversibly binds nitric oxide (NO). Also binds tightly to histamine, which is released by the host to induce wound healing. This chain is Nitrophorin-1, found in Rhodnius prolixus (Triatomid bug).